Consider the following 368-residue polypeptide: Protein-glutamate methylesterase/protein-glutamine glutaminase 2 (368 aa).

The 118-residue stretch at 6–123 folds into the Response regulatory domain; the sequence is KVLLVDDSAV…KEYLESAAGE (118 aa). At D57 the chain carries 4-aspartylphosphate. In terms of domain architecture, CheB-type methylesterase spans 169–355; sequence IAGANKIAAL…SLERIPQCVL (187 aa). Residues S181, H207, and D303 contribute to the active site.

This sequence belongs to the CheB family. In terms of processing, phosphorylated by CheA. Phosphorylation of the N-terminal regulatory domain activates the methylesterase activity.

The protein resides in the cytoplasm. The catalysed reaction is [protein]-L-glutamate 5-O-methyl ester + H2O = L-glutamyl-[protein] + methanol + H(+). It catalyses the reaction L-glutaminyl-[protein] + H2O = L-glutamyl-[protein] + NH4(+). Its function is as follows. Involved in chemotaxis. Part of a chemotaxis signal transduction system that modulates chemotaxis in response to various stimuli. Catalyzes the demethylation of specific methylglutamate residues introduced into the chemoreceptors (methyl-accepting chemotaxis proteins or MCP) by CheR. Also mediates the irreversible deamidation of specific glutamine residues to glutamic acid. This Hahella chejuensis (strain KCTC 2396) protein is Protein-glutamate methylesterase/protein-glutamine glutaminase 2.